The chain runs to 1387 residues: DNA-directed RNA polymerase subunit beta'' (1387 aa).

C224, C295, C302, and C305 together coordinate Zn(2+).

The protein belongs to the RNA polymerase beta' chain family. RpoC2 subfamily. In plastids the minimal PEP RNA polymerase catalytic core is composed of four subunits: alpha, beta, beta', and beta''. When a (nuclear-encoded) sigma factor is associated with the core the holoenzyme is formed, which can initiate transcription. Zn(2+) serves as cofactor.

The protein localises to the plastid. The protein resides in the chloroplast. It catalyses the reaction RNA(n) + a ribonucleoside 5'-triphosphate = RNA(n+1) + diphosphate. Functionally, DNA-dependent RNA polymerase catalyzes the transcription of DNA into RNA using the four ribonucleoside triphosphates as substrates. This Panax ginseng (Korean ginseng) protein is DNA-directed RNA polymerase subunit beta''.